Consider the following 286-residue polypeptide: Beta-lactamase Ohio-1 (286 aa).

Residues 1-21 form the signal peptide; the sequence is MRYFRLCIISLLATLPLRVHA. Catalysis depends on Ser66, which acts as the Acyl-ester intermediate. The cysteines at positions 73 and 119 are disulfide-linked. The active-site Proton acceptor is the Glu164. Substrate is bound at residue 230 to 232; sequence KTG.

The protein belongs to the class-A beta-lactamase family.

It carries out the reaction a beta-lactam + H2O = a substituted beta-amino acid. The sequence is that of Beta-lactamase Ohio-1 from Enterobacter cloacae.